Reading from the N-terminus, the 258-residue chain is MNTSSSFKALASPPLISTSRPTTKSFPNPRFTSRFSPKPITCMRDSLNLGSNPKAPSPFSLATVSVDAPLGTKTSDKLRILVSEFRSLTEPIDRVKRLLNYAATLAPLDESARISENRVTGCTTQVWLEIKMDEFGRMRFKADSDSEISKGFCSCLIWILDGAKPEEVMGVRSEDLSEMNVGVHGKEQSRVNTWHNVLMSMQKRTMTLVATDVAHQRGQRPPHQHDLLFKYVNGSYMESSKVHDYSISLLPLYYDFII.

Residues 1–32 (MNTSSSFKALASPPLISTSRPTTKSFPNPRFT) are disordered. Residues 15-32 (LISTSRPTTKSFPNPRFT) are compositionally biased toward polar residues. The active-site Cysteine persulfide intermediate is Cys122.

Belongs to the SufE family. As to expression, highly expressed in flowers and pollen, and at low levels in roots, leaves and stems.

The protein localises to the plastid. The protein resides in the chloroplast. It participates in cofactor biosynthesis; iron-sulfur cluster biosynthesis. Participates in cysteine desulfurization mediated by NFS2. Can activate the cysteine desulfurase activity of NFS2 in vitro. Cysteine desulfurization mobilizes sulfur from L-cysteine to yield L-alanine and supplies the inorganic sulfur for iron-sulfur (Fe-S) cluster formation. This Arabidopsis thaliana (Mouse-ear cress) protein is SufE-like protein 2, chloroplastic (SUFE2).